Reading from the N-terminus, the 336-residue chain is Anthranilate phosphoribosyltransferase (336 aa).

5-phospho-alpha-D-ribose 1-diphosphate is bound by residues glycine 79, 82–83 (GD), threonine 87, 89–92 (NIST), 107–115 (KHGNRAMSS), and serine 119. Glycine 79 provides a ligand contact to anthranilate. Residue serine 91 participates in Mg(2+) binding. Position 110 (asparagine 110) interacts with anthranilate. Arginine 165 contributes to the anthranilate binding site. 2 residues coordinate Mg(2+): aspartate 225 and glutamate 226.

It belongs to the anthranilate phosphoribosyltransferase family. As to quaternary structure, homodimer. Requires Mg(2+) as cofactor.

The enzyme catalyses N-(5-phospho-beta-D-ribosyl)anthranilate + diphosphate = 5-phospho-alpha-D-ribose 1-diphosphate + anthranilate. Its pathway is amino-acid biosynthesis; L-tryptophan biosynthesis; L-tryptophan from chorismate: step 2/5. Its function is as follows. Catalyzes the transfer of the phosphoribosyl group of 5-phosphorylribose-1-pyrophosphate (PRPP) to anthranilate to yield N-(5'-phosphoribosyl)-anthranilate (PRA). This is Anthranilate phosphoribosyltransferase from Dictyoglomus turgidum (strain DSM 6724 / Z-1310).